The primary structure comprises 240 residues: Probable septum site-determining protein MinC (240 aa).

Belongs to the MinC family. Interacts with MinD and FtsZ.

Cell division inhibitor that blocks the formation of polar Z ring septums. Rapidly oscillates between the poles of the cell to destabilize FtsZ filaments that have formed before they mature into polar Z rings. Prevents FtsZ polymerization. The sequence is that of Probable septum site-determining protein MinC from Buchnera aphidicola subsp. Cinara cedri (strain Cc).